Reading from the N-terminus, the 217-residue chain is ATP-dependent Clp protease proteolytic subunit 2 (217 aa).

S113 (nucleophile) is an active-site residue. H138 is an active-site residue.

Belongs to the peptidase S14 family. Fourteen ClpP subunits assemble into 2 heptameric rings which stack back to back to give a disk-like structure with a central cavity, resembling the structure of eukaryotic proteasomes.

It localises to the cytoplasm. The catalysed reaction is Hydrolysis of proteins to small peptides in the presence of ATP and magnesium. alpha-casein is the usual test substrate. In the absence of ATP, only oligopeptides shorter than five residues are hydrolyzed (such as succinyl-Leu-Tyr-|-NHMec, and Leu-Tyr-Leu-|-Tyr-Trp, in which cleavage of the -Tyr-|-Leu- and -Tyr-|-Trp bonds also occurs).. In terms of biological role, cleaves peptides in various proteins in a process that requires ATP hydrolysis. Has a chymotrypsin-like activity. Plays a major role in the degradation of misfolded proteins. The chain is ATP-dependent Clp protease proteolytic subunit 2 from Frankia casuarinae (strain DSM 45818 / CECT 9043 / HFP020203 / CcI3).